The following is a 59-amino-acid chain: UPF0434 protein COSY_0767 (59 aa).

Belongs to the UPF0434 family.

The protein is UPF0434 protein COSY_0767 of Vesicomyosocius okutanii subsp. Calyptogena okutanii (strain HA).